Here is a 422-residue protein sequence, read N- to C-terminus: 26S proteasome non-ATPase regulatory subunit 11B (422 aa).

The PCI domain occupies 228-392 (AYSYFFEAFE…DVLIIFEEPP (165 aa)).

Belongs to the proteasome subunit S9 family. In terms of assembly, component of the lid subcomplex of the 19S proteasome regulatory particle complex (also named PA700 complex). The 26S proteasome consists of a 20S proteasome core and two 19S regulatory subunits.

The protein resides in the nucleus. The protein localises to the cytoplasm. Its subcellular location is the cytosol. In terms of biological role, component of the lid subcomplex of the 26S proteasome, a multiprotein complex involved in the ATP-dependent degradation of ubiquitinated proteins. In the complex, psmd11b is required for proteasome assembly. The protein is 26S proteasome non-ATPase regulatory subunit 11B (psmd11b) of Danio rerio (Zebrafish).